The following is a 248-amino-acid chain: Small ribosomal subunit protein uS3 (248 aa).

One can recognise a KH type-2 domain in the interval 39–108 (IRKLVSQKLA…TVAVNVAEIP (70 aa)). The interval 212–248 (KTETLARPPRKSDERRREDGERPSRRRPTARRRPGGE) is disordered. The segment covering 221-234 (RKSDERRREDGERP) has biased composition (basic and acidic residues). Residues 235–248 (SRRRPTARRRPGGE) are compositionally biased toward basic residues.

This sequence belongs to the universal ribosomal protein uS3 family. Part of the 30S ribosomal subunit. Forms a tight complex with proteins S10 and S14.

Its function is as follows. Binds the lower part of the 30S subunit head. Binds mRNA in the 70S ribosome, positioning it for translation. The protein is Small ribosomal subunit protein uS3 of Deinococcus geothermalis (strain DSM 11300 / CIP 105573 / AG-3a).